The following is a 345-amino-acid chain: Ephrin-B1 (345 aa).

Residues 1–24 (MARPGQRWLSKWLVAMVVLTLCRL) form the signal peptide. Residues 25–236 (ATPLAKNLEP…GDSDSFFNSK (212 aa)) lie on the Extracellular side of the membrane. Positions 30–164 (KNLEPVSWSS…TRTMKIVMKV (135 aa)) constitute an Ephrin RBD domain. Disulfide bonds link Cys64-Cys101 and Cys89-Cys153. N-linked (GlcNAc...) asparagine glycosylation occurs at Asn139. The interval 169 to 227 (NAVTPEQLTTSRPSKESDNTVKTATQAPGRGSQGDSDGKHETVNQEEKSGPGAGGGGSG) is disordered. The span at 204–217 (SDGKHETVNQEEKS) shows a compositional bias: basic and acidic residues. A helical membrane pass occupies residues 237 to 257 (VALFAAVGAGCVIFLLIIIFL). The Cytoplasmic segment spans residues 258 to 345 (TVLLLKLRKR…QSPANIYYKV (88 aa)). The short motif at 259–272 (VLLLKLRKRHRKHT) is the Nuclear localization signal element. The interval 262–293 (LKLRKRHRKHTQQRAAALSLSTLASPKGGSGT) is interaction with ZHX2. A phosphoserine mark is found at Ser280 and Ser286. Residues 343 to 345 (YKV) carry the PDZ-binding motif.

This sequence belongs to the ephrin family. As to quaternary structure, interacts (via PDZ-binding motif) with GRIP1 and GRIP2 (via PDZ domain 6). Interacts with TLE1. The intracellular domain peptide interacts with ZHX2; the interaction enhances ZHX2 transcriptional repression activity. Post-translationally, inducible phosphorylation of tyrosine residues in the cytoplasmic domain. In terms of processing, proteolytically processed. The ectodomain is cleaved, probably by a metalloprotease, to produce a membrane-tethered C-terminal fragment. This fragment is then further processed by the gamma-secretase complex to yield a soluble intracellular domain peptide which can translocate to the nucleus. The intracellular domain peptide is highly labile suggesting that it is targeted for degradation by the proteasome. Expressed on lateral floor plate cells, specifically on commissural axon segments that have passed through the floor plate. Expressed in cells of the retinal ganglion cell layer during retinal axon guidance to the optic disk. Expressed in myogenic progenitor cells.

The protein localises to the cell membrane. It localises to the membrane raft. The protein resides in the nucleus. Cell surface transmembrane ligand for Eph receptors, a family of receptor tyrosine kinases which are crucial for migration, repulsion and adhesion during neuronal, vascular and epithelial development. Binding to Eph receptors residing on adjacent cells leads to contact-dependent bidirectional signaling into neighboring cells. Shows high affinity for the receptor tyrosine kinase EPHB1/ELK. Can also bind EPHB2 and EPHB3. Binds to, and induces the collapse of, commissural axons/growth cones in vitro. May play a role in constraining the orientation of longitudinally projecting axons. This is Ephrin-B1 (Efnb1) from Mus musculus (Mouse).